Here is a 142-residue protein sequence, read N- to C-terminus: MALTQAEKAAVTTIWAKVATQIESIGLESLERLFASYPQTKTYFPHFDVSQGSVQLRGHGSKVLNAIGEAVKNIDDIRGALAKLSELHAYILRVDPVNFKLLSHCILCSVAARYPSDFTPEVHAAWDKFLSSISSVLTEKYR.

Residues Ala2 to Arg142 form the Globin domain. Heme b contacts are provided by His59 and His88.

It belongs to the globin family.

The pi' chain is the counterpart of the alpha chain in the major early embryonic hemoglobin P. The sequence is that of Hemoglobin subunit pi from Gallus gallus (Chicken).